The following is a 342-amino-acid chain: Farnesyl pyrophosphate synthase (342 aa).

Isopentenyl diphosphate contacts are provided by Lys-47, Arg-50, and Gln-86. Residues Asp-93 and Asp-97 each contribute to the Mg(2+) site. Residue Arg-102 coordinates dimethylallyl diphosphate. An isopentenyl diphosphate-binding site is contributed by Arg-103. 5 residues coordinate dimethylallyl diphosphate: Lys-190, Thr-191, Gln-229, Lys-246, and Lys-255.

Belongs to the FPP/GGPP synthase family. As to quaternary structure, homodimer. Mg(2+) is required as a cofactor. As to expression, mostly expressed in roots and seeds, and to a lower extent, in leaves and stems.

It localises to the cytoplasm. It catalyses the reaction isopentenyl diphosphate + dimethylallyl diphosphate = (2E)-geranyl diphosphate + diphosphate. It carries out the reaction isopentenyl diphosphate + (2E)-geranyl diphosphate = (2E,6E)-farnesyl diphosphate + diphosphate. It functions in the pathway isoprenoid biosynthesis; farnesyl diphosphate biosynthesis; farnesyl diphosphate from geranyl diphosphate and isopentenyl diphosphate: step 1/1. The protein operates within isoprenoid biosynthesis; geranyl diphosphate biosynthesis; geranyl diphosphate from dimethylallyl diphosphate and isopentenyl diphosphate: step 1/1. With respect to regulation, stimulated by methyl jasmonate (MeJA). Its function is as follows. Catalyzes the sequential condensation of isopentenyl pyrophosphate with the allylic pyrophosphates, dimethylallyl pyrophosphate, and then with the resultant geranylpyrophosphate to the ultimate product farnesyl pyrophosphate. Component of the triterpene saponins (e.g. ginsenosides or panaxosides) and phytosterols biosynthetic pathways. Promotes the accumulation of ginsenosides. This is Farnesyl pyrophosphate synthase from Panax ginseng (Korean ginseng).